We begin with the raw amino-acid sequence, 358 residues long: L-lysine 3-hydroxylase (358 aa).

3 residues coordinate Fe cation: His178, Glu180, and His314. Arg328 lines the 2-oxoglutarate pocket.

This sequence belongs to the clavaminate synthase family. Requires Fe(2+) as cofactor.

It carries out the reaction L-lysine + 2-oxoglutarate + O2 = (3S)-3-hydroxy-L-lysine + succinate + CO2. Functionally, alpha-ketoglutarate-dependent dioxygenase that in vitro catalyzes the regio- and stereoselective hydroxylation of L-lysine, leading to (3S)-3-hydroxy-L-lysine. Can also use (5R)-5-hydroxy-L-lysine as substrate, but neither D-lysine nor L-ornithine. The sequence is that of L-lysine 3-hydroxylase from Catenulispora acidiphila (strain DSM 44928 / JCM 14897 / NBRC 102108 / NRRL B-24433 / ID139908).